A 1066-amino-acid chain; its full sequence is Kinesin-like protein Klp61F (1066 aa).

One can recognise a Kinesin motor domain in the interval 19-356 (NIQVYVRVRP…LEYAHRAKNI (338 aa)). 103–110 (GQTGTGKT) is a binding site for ATP. The stretch at 362–462 (VNQKLTKKTV…KTEENLLNTK (101 aa)) forms a coiled coil. At threonine 520 the chain carries Phosphothreonine. Coiled coils occupy residues 540-569 (DRMQ…QLSQ), 639-738 (LMSK…QIKN), 808-875 (CSML…LITE), and 889-918 (DLVQ…ELVR). Threonine 933 is subject to Phosphothreonine. Serine 949 bears the Phosphoserine mark. Residues 990–1002 (ELSETETIMNSTP) show a composition bias toward polar residues. Disordered regions lie at residues 990–1009 (ELSE…VDGV) and 1016–1066 (GTTR…ENVA). Residues 1033 to 1051 (GGKRSSSLSRSLTPSKTSP) show a composition bias toward low complexity. Serine 1043 is modified (phosphoserine). Residue threonine 1045 is modified to Phosphothreonine. Phosphoserine is present on residues serine 1050 and serine 1054.

Belongs to the TRAFAC class myosin-kinesin ATPase superfamily. Kinesin family. BimC subfamily. In terms of assembly, homotetramer. Consists of two pairs of polypeptides associated by coiled-coil interactions to form two homodimers. The homodimers are linked by lateral interactions between their coiled-coil regions to form a bipolar homotetramer consisting of a central rod with two motor domains projecting from either end. Parallel coiled coils extend from each pair of motor heads, switch to two antiparallel coiled coils in the central region and then back to parallel coiled coils. Interacts with Wee1. Post-translationally, phosphorylation is required for localization to mitotic spindles. Phosphorylation of Thr-933 during mitosis controls association with the spindle apparatus. Phosphorylated in vitro by Wee1.

It is found in the cytoplasm. Its subcellular location is the cytoskeleton. The protein resides in the spindle. It localises to the spindle pole. Functionally, important role in mitotic dividing cells. Microtubule motor required for spindle body separation. Slow plus-end directed microtubule motor capable of cross-linking and sliding apart antiparallel microtubules, thereby pushing apart the associated spindle poles during spindle assembly and function. Forms cross-links between microtubules within interpolar microtubule bundles. Contributes to the length of the metaphase spindle, maintains the prometaphase spindle by antagonizing Ncd, drives anaphase B, and also contributes to normal chromosome congression, kinetochore spacing, and anaphase A rates. Displays microtubule-stimulated ATPase activity. Required for normal fusome organization. Required in non-mitotic cells for transport of secretory proteins from the Golgi complex to the cell surface. This chain is Kinesin-like protein Klp61F, found in Drosophila melanogaster (Fruit fly).